The chain runs to 360 residues: Geranylgeranyl pyrophosphate synthase 3, chloroplastic (360 aa).

A chloroplast-targeting transit peptide spans 1-39; that stretch reads MATTVHLSSFSLFIQSRGRRDNSISSVKSLKKRTGLSPS. Residues 24 to 54 are disordered; that stretch reads ISSVKSLKKRTGLSPSSALTSQGGRDMIPPE. Residues 36–46 show a composition bias toward polar residues; the sequence is LSPSSALTSQG. Isopentenyl diphosphate is bound by residues Lys106, Arg109, and His138. Positions 145 and 151 each coordinate Mg(2+). Dimethylallyl diphosphate is bound at residue Arg156. Arg157 is an isopentenyl diphosphate binding site. The dimethylallyl diphosphate site is built by Lys245, Thr246, Gln283, Lys300, and Lys310.

This sequence belongs to the FPP/GGPP synthase family. As to quaternary structure, monomer. It depends on Mg(2+) as a cofactor. As to expression, mainly expressed in roots.

The protein localises to the plastid. Its subcellular location is the chloroplast. It catalyses the reaction isopentenyl diphosphate + dimethylallyl diphosphate = (2E)-geranyl diphosphate + diphosphate. The catalysed reaction is isopentenyl diphosphate + (2E)-geranyl diphosphate = (2E,6E)-farnesyl diphosphate + diphosphate. It carries out the reaction isopentenyl diphosphate + (2E,6E)-farnesyl diphosphate = (2E,6E,10E)-geranylgeranyl diphosphate + diphosphate. The protein operates within isoprenoid biosynthesis; farnesyl diphosphate biosynthesis; farnesyl diphosphate from geranyl diphosphate and isopentenyl diphosphate: step 1/1. Its pathway is isoprenoid biosynthesis; geranyl diphosphate biosynthesis; geranyl diphosphate from dimethylallyl diphosphate and isopentenyl diphosphate: step 1/1. It participates in isoprenoid biosynthesis; geranylgeranyl diphosphate biosynthesis; geranylgeranyl diphosphate from farnesyl diphosphate and isopentenyl diphosphate: step 1/1. Catalyzes the trans-addition of the three molecules of IPP onto DMAPP to form geranylgeranyl pyrophosphate. In Arabidopsis thaliana (Mouse-ear cress), this protein is Geranylgeranyl pyrophosphate synthase 3, chloroplastic (GGPP3).